The sequence spans 1428 residues: DNA polymerase III PolC-type (1428 aa).

In terms of domain architecture, Exonuclease spans 414–570 (FVVFDVETTG…YDAEATGYLL (157 aa)).

It belongs to the DNA polymerase type-C family. PolC subfamily.

The protein resides in the cytoplasm. The catalysed reaction is DNA(n) + a 2'-deoxyribonucleoside 5'-triphosphate = DNA(n+1) + diphosphate. In terms of biological role, required for replicative DNA synthesis. This DNA polymerase also exhibits 3' to 5' exonuclease activity. The chain is DNA polymerase III PolC-type from Oceanobacillus iheyensis (strain DSM 14371 / CIP 107618 / JCM 11309 / KCTC 3954 / HTE831).